The chain runs to 111 residues: Large ribosomal subunit protein uL22 (111 aa).

The protein belongs to the universal ribosomal protein uL22 family. In terms of assembly, part of the 50S ribosomal subunit.

This protein binds specifically to 23S rRNA; its binding is stimulated by other ribosomal proteins, e.g. L4, L17, and L20. It is important during the early stages of 50S assembly. It makes multiple contacts with different domains of the 23S rRNA in the assembled 50S subunit and ribosome. Functionally, the globular domain of the protein is located near the polypeptide exit tunnel on the outside of the subunit, while an extended beta-hairpin is found that lines the wall of the exit tunnel in the center of the 70S ribosome. The sequence is that of Large ribosomal subunit protein uL22 from Chlamydia caviae (strain ATCC VR-813 / DSM 19441 / 03DC25 / GPIC) (Chlamydophila caviae).